A 135-amino-acid polypeptide reads, in one-letter code: Large ribosomal subunit protein bL21 (135 aa).

A compositionally biased stretch (polar residues) spans 109–128 (TLATAQSAPPSTSEATTDTT). Residues 109–135 (TLATAQSAPPSTSEATTDTTGIPAAEE) are disordered.

Belongs to the bacterial ribosomal protein bL21 family. In terms of assembly, part of the 50S ribosomal subunit. Contacts protein L20.

In terms of biological role, this protein binds to 23S rRNA in the presence of protein L20. The chain is Large ribosomal subunit protein bL21 from Synechococcus sp. (strain JA-3-3Ab) (Cyanobacteria bacterium Yellowstone A-Prime).